We begin with the raw amino-acid sequence, 305 residues long: Orotidine 5'-phosphate decarboxylase (305 aa).

K108 (proton donor) is an active-site residue.

It belongs to the OMP decarboxylase family. Type 2 subfamily.

The enzyme catalyses orotidine 5'-phosphate + H(+) = UMP + CO2. It participates in pyrimidine metabolism; UMP biosynthesis via de novo pathway; UMP from orotate: step 2/2. This Caldicellulosiruptor saccharolyticus (strain ATCC 43494 / DSM 8903 / Tp8T 6331) protein is Orotidine 5'-phosphate decarboxylase.